We begin with the raw amino-acid sequence, 243 residues long: Probable 6-oxopurine nucleoside phosphorylase (243 aa).

Residues T8 and 48 to 49 (RH) contribute to the phosphate site. M174 lines the substrate pocket. T175 serves as a coordination point for phosphate. 198-200 (NYA) contacts substrate.

Belongs to the PNP/MTAP phosphorylase family. MTAP subfamily. In terms of assembly, homohexamer. Dimer of a homotrimer.

The enzyme catalyses a purine D-ribonucleoside + phosphate = a purine nucleobase + alpha-D-ribose 1-phosphate. It functions in the pathway purine metabolism; purine nucleoside salvage. Functionally, purine nucleoside phosphorylase which is highly specific for 6-oxopurine nucleosides. Cleaves guanosine or inosine to respective bases and sugar-1-phosphate molecules. Involved in purine salvage. The polypeptide is Probable 6-oxopurine nucleoside phosphorylase (Archaeoglobus fulgidus (strain ATCC 49558 / DSM 4304 / JCM 9628 / NBRC 100126 / VC-16)).